A 115-amino-acid chain; its full sequence is NADH-ubiquinone oxidoreductase chain 3 (115 aa).

3 helical membrane-spanning segments follow: residues 3-23, 55-75, and 86-106; these read LMIT…IAFW, FFLV…LLPL, and LTLL…AYEW.

It belongs to the complex I subunit 3 family. As to quaternary structure, core subunit of respiratory chain NADH dehydrogenase (Complex I) which is composed of 45 different subunits. Interacts with TMEM186. Interacts with TMEM242.

The protein resides in the mitochondrion inner membrane. The catalysed reaction is a ubiquinone + NADH + 5 H(+)(in) = a ubiquinol + NAD(+) + 4 H(+)(out). In terms of biological role, core subunit of the mitochondrial membrane respiratory chain NADH dehydrogenase (Complex I) which catalyzes electron transfer from NADH through the respiratory chain, using ubiquinone as an electron acceptor. Essential for the catalytic activity of complex I. In Loxodonta africana (African elephant), this protein is NADH-ubiquinone oxidoreductase chain 3.